A 447-amino-acid polypeptide reads, in one-letter code: Crotonyl-CoA reductase (447 aa).

It belongs to the zinc-containing alcohol dehydrogenase family. Crotonyl-CoA carboxylase/reductase subfamily. In terms of assembly, homodimer.

The enzyme catalyses butanoyl-CoA + NADP(+) = (2E)-butenoyl-CoA + NADPH + H(+). With respect to regulation, inhibited by divalent cations (30-100%), beta-chloromercuribenzoate (85%), iodoacetamide (40%) and N-ethylmaleamide (80%). The presence of CoA thioesters containing 12-20 carbon atoms results in inhibition of enzyme activity. The greatest degree of inhibition is observed in the presence of palmitoyl-CoA and myristoyl-CoA. The branched-chain fatty acids, isopalmitoyl-CoA and isomyristoyl-CoA are less effective inhibitors of the crotonyl-CoA reductase. Concentrations of NADPH above 200 uM lead to inhibition of enzyme activity. In terms of biological role, may play a role in supplying butyryl-CoA for straight-chain fatty acid biosynthesis. Catalyzes the conversion of crotonyl-CoA to butyryl-CoA. It shows a high substrate specificity for crotonyl-CoA, a short-chain-length (C4), but no measurable activity is observed with shorter (C3) or longer-chain-length enoyl-CoA thioesters. In Streptomyces collinus, this protein is Crotonyl-CoA reductase (ccr).